A 377-amino-acid chain; its full sequence is Probable sensor histidine kinase HK (377 aa).

Disordered stretches follow at residues 1 to 169 and 346 to 377; these read MAHP…RPAD and LPTP…TSDQ. Residues 10 to 54 are compositionally biased toward basic residues; sequence RLQRRHGARSGSSRCRHRRPVPRRRSRSRPRWRAARAHRRHHRRS. The span at 84–98 shows a compositional bias: basic and acidic residues; sequence RRPDPRGGANTDHHA. 2 stretches are compositionally biased toward basic residues: residues 99-115 and 137-146; these read APRH…RRRD and TTVRRRRQPR. One can recognise a Histidine kinase domain in the interval 146–350; sequence RITHPVGTAD…ELRITLPTPR (205 aa). The residue at position 149 (H149) is a Phosphohistidine; by autocatalysis. Residues 352-377 show a composition bias toward basic and acidic residues; sequence PFHEELPRITSSDTKDPNREHDTSDQ.

Autophosphorylated.

The catalysed reaction is ATP + protein L-histidine = ADP + protein N-phospho-L-histidine.. In terms of biological role, member of the two-component system HK/TcrA. Phosphorylates TcrA. In Mycobacterium tuberculosis (strain CDC 1551 / Oshkosh), this protein is Probable sensor histidine kinase HK.